The primary structure comprises 266 residues: Protein YABBY 5 (266 aa).

The interval 1–22 (MMSSAPETFSLDHLSQHQQQQP) is disordered. The segment at 36–63 (CNFCDTILAVGVPCSSLFKTVTVRCGHC) adopts a C4-type zinc-finger fold. The span at 119 to 141 (ASPNVSSITSSNSSCANNAPATS) shows a compositional bias: low complexity. Residues 119-174 (ASPNVSSITSSNSSCANNAPATSMASAANKATQREPQQPKNAPSANRTSEKRQRVP) form a disordered region. The span at 142 to 165 (MASAANKATQREPQQPKNAPSANR) shows a compositional bias: polar residues.

The protein belongs to the YABBY family.

It is found in the nucleus. In terms of biological role, may be involved in leaf cell growth and differentiation, rather than abaxial cell fate determination. The chain is Protein YABBY 5 (YAB5) from Oryza sativa subsp. indica (Rice).